The sequence spans 540 residues: NXPE family member 1 (540 aa).

The signal sequence occupies residues M1–S22. N-linked (GlcNAc...) asparagine glycans are attached at residues N24, N42, N87, N155, N205, and N291.

Belongs to the NXPE family. As to expression, intestine, and to a lesser extent in kidney.

It localises to the secreted. The chain is NXPE family member 1 (NXPE1) from Oryctolagus cuniculus (Rabbit).